The primary structure comprises 140 residues: Short-chain diamines transporter (140 aa).

Helical transmembrane passes span 7–27 (IFHAVLFELMALAIIVPAAAL), 36–56 (LALVGIGLSLYTVVWNYIYNL), 79–99 (VGFEGGLIFISIPVIAWFLEI), and 105–125 (LMLEAGFLVFFLFYATGFNWL).

Belongs to the proteobacterial antimicrobial compound efflux (PACE) (TC 2.A.117) family.

Its subcellular location is the cell inner membrane. In terms of biological role, mediates the efflux of short-chain diamines when energized by an electrochemical gradient. Confers resistance to chlorhexidine, benzalkonium, proflavine and acriflavine. Mediates efflux of both proflavine and acriflavine via an energy-dependent mechanism. The protein is Short-chain diamines transporter of Vibrio parahaemolyticus serotype O3:K6 (strain RIMD 2210633).